A 484-amino-acid chain; its full sequence is MSNPHSSAVIVLAAGAGTRMKSAKQKTLHSIGGRSLLAHSLHAAAGLSPQRIVAVIGHRREQVRPEVEAVAATVDCEISVAIQEQQNGTGHAVQCAMHELEGFEGTVVVTNGDVPLLRSETLRSLVDAHTAVPTAVTVLTMSLSDPTGYGRIVRNDEGEVTAIVEQKDGDEETLKITEVNSGVFAFDAAILRSSLGKLDSNNAQGELYLTDVLSIARTEGHPVRAYRAHDHRELAGVNDRVQLAQAGKILNQRLVEDAMRNGATIVDPDTTWIDSEVTIGRDVIIHPSTQLLGKTSIADNCVIGPDTTLTNMVIDEDAHVIRTHGFDSRIGAHANIGPFTYIRPGTVVGENGKLGGFVEAKNAQIGRGSKVPHLTYIGDATVGEESNIGASSVFVNYDGVNKHHTTIGSHVRTGSDTMFIAPVTVGDGAYSGAGTVIKEDVPAGALVVSGGKQRNIEGWVEKNRPGTPAADAARQAHAHETKEG.

Residues 1-240 (MSNPHSSAVI…HRELAGVNDR (240 aa)) are pyrophosphorylase. UDP-N-acetyl-alpha-D-glucosamine-binding positions include 12 to 15 (LAAG), K26, Q83, and 88 to 89 (GT). D113 is a Mg(2+) binding site. UDP-N-acetyl-alpha-D-glucosamine contacts are provided by G150, E165, N180, and N238. Position 238 (N238) interacts with Mg(2+). A linker region spans residues 241–261 (VQLAQAGKILNQRLVEDAMRN). The interval 262–484 (GATIVDPDTT…QAHAHETKEG (223 aa)) is N-acetyltransferase. Residues R343 and K361 each coordinate UDP-N-acetyl-alpha-D-glucosamine. H373 serves as the catalytic Proton acceptor. UDP-N-acetyl-alpha-D-glucosamine is bound by residues Y376 and N387. Residues A390, 396–397 (NY), S415, and A433 each bind acetyl-CoA. A disordered region spans residues 461 to 484 (EKNRPGTPAADAARQAHAHETKEG).

The protein in the N-terminal section; belongs to the N-acetylglucosamine-1-phosphate uridyltransferase family. It in the C-terminal section; belongs to the transferase hexapeptide repeat family. Homotrimer. The cofactor is Mg(2+).

It is found in the cytoplasm. It catalyses the reaction alpha-D-glucosamine 1-phosphate + acetyl-CoA = N-acetyl-alpha-D-glucosamine 1-phosphate + CoA + H(+). It carries out the reaction N-acetyl-alpha-D-glucosamine 1-phosphate + UTP + H(+) = UDP-N-acetyl-alpha-D-glucosamine + diphosphate. It participates in nucleotide-sugar biosynthesis; UDP-N-acetyl-alpha-D-glucosamine biosynthesis; N-acetyl-alpha-D-glucosamine 1-phosphate from alpha-D-glucosamine 6-phosphate (route II): step 2/2. The protein operates within nucleotide-sugar biosynthesis; UDP-N-acetyl-alpha-D-glucosamine biosynthesis; UDP-N-acetyl-alpha-D-glucosamine from N-acetyl-alpha-D-glucosamine 1-phosphate: step 1/1. It functions in the pathway bacterial outer membrane biogenesis; LPS lipid A biosynthesis. Catalyzes the last two sequential reactions in the de novo biosynthetic pathway for UDP-N-acetylglucosamine (UDP-GlcNAc). The C-terminal domain catalyzes the transfer of acetyl group from acetyl coenzyme A to glucosamine-1-phosphate (GlcN-1-P) to produce N-acetylglucosamine-1-phosphate (GlcNAc-1-P), which is converted into UDP-GlcNAc by the transfer of uridine 5-monophosphate (from uridine 5-triphosphate), a reaction catalyzed by the N-terminal domain. The chain is Bifunctional protein GlmU from Corynebacterium diphtheriae (strain ATCC 700971 / NCTC 13129 / Biotype gravis).